The sequence spans 205 residues: Imidazole glycerol phosphate synthase subunit HisH (205 aa).

Residues 3 to 205 form the Glutamine amidotransferase type-1 domain; that stretch reads RIALLDYGMG…LLKNFVEWNI (203 aa). Cys80 (nucleophile) is an active-site residue. Active-site residues include His185 and Glu187.

Heterodimer of HisH and HisF.

Its subcellular location is the cytoplasm. The catalysed reaction is 5-[(5-phospho-1-deoxy-D-ribulos-1-ylimino)methylamino]-1-(5-phospho-beta-D-ribosyl)imidazole-4-carboxamide + L-glutamine = D-erythro-1-(imidazol-4-yl)glycerol 3-phosphate + 5-amino-1-(5-phospho-beta-D-ribosyl)imidazole-4-carboxamide + L-glutamate + H(+). It carries out the reaction L-glutamine + H2O = L-glutamate + NH4(+). Its pathway is amino-acid biosynthesis; L-histidine biosynthesis; L-histidine from 5-phospho-alpha-D-ribose 1-diphosphate: step 5/9. In terms of biological role, IGPS catalyzes the conversion of PRFAR and glutamine to IGP, AICAR and glutamate. The HisH subunit catalyzes the hydrolysis of glutamine to glutamate and ammonia as part of the synthesis of IGP and AICAR. The resulting ammonia molecule is channeled to the active site of HisF. This chain is Imidazole glycerol phosphate synthase subunit HisH, found in Acinetobacter baylyi (strain ATCC 33305 / BD413 / ADP1).